The primary structure comprises 740 residues: MISFGPAQESSLKMEVQSVSSEVNGHQIMDEPMEEESYTHCDEGAYKEIPITHHVKEGCEKADPSQFELLKVLGQGSFGKVFLVRKLMGPDAGQLYAMKVLKKASLKVRDRVRTKMERDILVEVNHPFIVKLHYAFQTEGKLYLILDFLRGGDVFTRLSKEVMFTEEDVKFYLAELALALDHLHNLGIVYRDLKPENILLDEAGHIKLTDFGLSKESVDQDKKAYSFCGTVEYMAPEVVNRRGHTQSADWWSLGVLMFEMLTGTLPFQGKDRNETMNMILKAKLGMPQFLSLEAQGLLRMLFKRNPSNRLGAGPDGVEEIKRHTFFSTIDWNKLYRRELQPPFKPASGKPDDTFCFDPEFTAKTPKDSPGIPPSANAHQLFKGFSFVAPVSLEESKSAPLVNILPIVQVHGSSAQFSDVYELKEDIGVGSYSICKRCIHRVTAMEFAVKIIDKSKRDPSEEIEILMRYGQHPNIITLKDVYDEGRFVYLVTELMKGGELLDKILRQKFFSEREASAVLYTITKTVDYLHCQGVVHRDLKPSNILYMDDSGNPDSIRICDFGFAKQLRGDNGLLLTPCYTANFVAPEVLMRQGYDAACDIWSLGVLLYTMLAGYTPFANGPNDTPEEILLRIGSGKFSLSGGNWDSVSDSSKDLLSHMLHVDPHHRYTAEQVLKHSWIACRDQNPHFQLTRHEAPHLVKGAMAATYSALNHKTCKPVLEPVAASSLAQRRNMKKLTSTDMS.

Residues 67 to 326 (FELLKVLGQG…VEEIKRHTFF (260 aa)) form the Protein kinase 1 domain. Residues 73 to 81 (LGQGSFGKV) and Lys-99 each bind ATP. Asp-192 acts as the Proton acceptor in catalysis. Residues 327–396 (STIDWNKLYR…VAPVSLEESK (70 aa)) form the AGC-kinase C-terminal domain. The Protein kinase 2 domain maps to 420-677 (YELKEDIGVG…AEQVLKHSWI (258 aa)). Residues 426-434 (IGVGSYSIC) and Lys-449 each bind ATP. The active-site Proton acceptor is the Asp-537.

Belongs to the protein kinase superfamily. AGC Ser/Thr protein kinase family. S6 kinase subfamily. In terms of assembly, forms a complex with either ERK1 or ERK2 in quiescent cells. Transiently dissociates following mitogenic stimulation. Mg(2+) is required as a cofactor.

It carries out the reaction L-seryl-[protein] + ATP = O-phospho-L-seryl-[protein] + ADP + H(+). It catalyses the reaction L-threonyl-[protein] + ATP = O-phospho-L-threonyl-[protein] + ADP + H(+). With respect to regulation, activated by multiple phosphorylations on threonine and serine residues. In terms of biological role, serine/threonine kinase that may play a role in mediating the growth-factor and stress induced activation of the transcription factor CREB. The protein is Ribosomal protein S6 kinase alpha-6 (rps6ka6) of Danio rerio (Zebrafish).